The primary structure comprises 312 residues: DNA-directed RNA polymerase subunit alpha (312 aa).

Residues 1 to 229 (MLQYQIDRIE…ELFQPLATVT (229 aa)) form an alpha N-terminal domain (alpha-NTD) region. Residues 239 to 312 (EPSAEAQIPL…ISIPQSRTSA (74 aa)) form an alpha C-terminal domain (alpha-CTD) region.

Belongs to the RNA polymerase alpha chain family. In cyanobacteria the RNAP catalytic core is composed of 2 alpha, 1 beta, 1 beta', 1 gamma and 1 omega subunit. When a sigma factor is associated with the core the holoenzyme is formed, which can initiate transcription.

The catalysed reaction is RNA(n) + a ribonucleoside 5'-triphosphate = RNA(n+1) + diphosphate. In terms of biological role, DNA-dependent RNA polymerase catalyzes the transcription of DNA into RNA using the four ribonucleoside triphosphates as substrates. The sequence is that of DNA-directed RNA polymerase subunit alpha from Synechococcus sp. (strain CC9605).